Reading from the N-terminus, the 211-residue chain is Protein-methionine-sulfoxide reductase heme-binding subunit MsrQ (211 aa).

The next 5 helical transmembrane spans lie at 17-37 (LAGL…GLGA), 82-102 (LWCF…ELGV), 116-136 (PYLT…FTST), 153-173 (FVYL…KIIS), and 178-198 (IYAG…LSLF).

It belongs to the MsrQ family. Heterodimer of a catalytic subunit (MsrP) and a heme-binding subunit (MsrQ). It depends on FMN as a cofactor. Requires heme b as cofactor.

The protein resides in the cell inner membrane. In terms of biological role, part of the MsrPQ system that repairs oxidized periplasmic proteins containing methionine sulfoxide residues (Met-O), using respiratory chain electrons. Thus protects these proteins from oxidative-stress damage caused by reactive species of oxygen and chlorine generated by the host defense mechanisms. MsrPQ is essential for the maintenance of envelope integrity under bleach stress, rescuing a wide series of structurally unrelated periplasmic proteins from methionine oxidation, including the primary periplasmic chaperone SurA and the lipoprotein Pal. MsrQ provides electrons for reduction to the reductase catalytic subunit MsrP, using the quinone pool of the respiratory chain. The chain is Protein-methionine-sulfoxide reductase heme-binding subunit MsrQ from Shigella boydii serotype 4 (strain Sb227).